We begin with the raw amino-acid sequence, 208 residues long: Uracil phosphoribosyltransferase (208 aa).

Residues Arg78, Arg103, and 130–138 (DPMLATGGS) each bind 5-phospho-alpha-D-ribose 1-diphosphate. Residues Ile193 and 198 to 200 (GDA) contribute to the uracil site. Asp199 serves as a coordination point for 5-phospho-alpha-D-ribose 1-diphosphate.

Belongs to the UPRTase family. Requires Mg(2+) as cofactor.

The catalysed reaction is UMP + diphosphate = 5-phospho-alpha-D-ribose 1-diphosphate + uracil. Its pathway is pyrimidine metabolism; UMP biosynthesis via salvage pathway; UMP from uracil: step 1/1. Allosterically activated by GTP. In terms of biological role, catalyzes the conversion of uracil and 5-phospho-alpha-D-ribose 1-diphosphate (PRPP) to UMP and diphosphate. The polypeptide is Uracil phosphoribosyltransferase (Actinobacillus pleuropneumoniae serotype 5b (strain L20)).